A 430-amino-acid chain; its full sequence is 3-phosphoshikimate 1-carboxyvinyltransferase (430 aa).

3-phosphoshikimate-binding residues include lysine 23, serine 24, and arginine 28. A phosphoenolpyruvate-binding site is contributed by lysine 23. Phosphoenolpyruvate is bound by residues glycine 95 and arginine 123. Residues serine 169, glutamine 171, aspartate 315, and lysine 342 each coordinate 3-phosphoshikimate. A phosphoenolpyruvate-binding site is contributed by glutamine 171. Aspartate 315 (proton acceptor) is an active-site residue. Phosphoenolpyruvate contacts are provided by arginine 346 and arginine 388.

It belongs to the EPSP synthase family. Monomer.

The protein localises to the cytoplasm. The enzyme catalyses 3-phosphoshikimate + phosphoenolpyruvate = 5-O-(1-carboxyvinyl)-3-phosphoshikimate + phosphate. It participates in metabolic intermediate biosynthesis; chorismate biosynthesis; chorismate from D-erythrose 4-phosphate and phosphoenolpyruvate: step 6/7. In terms of biological role, catalyzes the transfer of the enolpyruvyl moiety of phosphoenolpyruvate (PEP) to the 5-hydroxyl of shikimate-3-phosphate (S3P) to produce enolpyruvyl shikimate-3-phosphate and inorganic phosphate. The polypeptide is 3-phosphoshikimate 1-carboxyvinyltransferase (Streptococcus pyogenes serotype M6 (strain ATCC BAA-946 / MGAS10394)).